The chain runs to 428 residues: UDP-N-acetylglucosamine 1-carboxyvinyltransferase (428 aa).

Phosphoenolpyruvate is bound at residue 25–26 (KN). Arg102 provides a ligand contact to UDP-N-acetyl-alpha-D-glucosamine. Residue Cys126 is the Proton donor of the active site. The residue at position 126 (Cys126) is a 2-(S-cysteinyl)pyruvic acid O-phosphothioketal. UDP-N-acetyl-alpha-D-glucosamine is bound by residues Asp316 and Val338.

It belongs to the EPSP synthase family. MurA subfamily.

Its subcellular location is the cytoplasm. It carries out the reaction phosphoenolpyruvate + UDP-N-acetyl-alpha-D-glucosamine = UDP-N-acetyl-3-O-(1-carboxyvinyl)-alpha-D-glucosamine + phosphate. It participates in cell wall biogenesis; peptidoglycan biosynthesis. Functionally, cell wall formation. Adds enolpyruvyl to UDP-N-acetylglucosamine. The protein is UDP-N-acetylglucosamine 1-carboxyvinyltransferase of Anaplasma marginale (strain St. Maries).